Reading from the N-terminus, the 369-residue chain is UPF0284 protein AM1_5137 (369 aa).

It belongs to the UPF0284 family.

This is UPF0284 protein AM1_5137 from Acaryochloris marina (strain MBIC 11017).